The primary structure comprises 351 residues: UDP-N-acetylenolpyruvoylglucosamine reductase (351 aa).

The region spanning 11–213 (GVGGSIACFI…KQVRDQVLRI (203 aa)) is the FAD-binding PCMH-type domain. Arg158 is a catalytic residue. Catalysis depends on Ser239, which acts as the Proton donor. Glu343 is a catalytic residue.

The protein belongs to the MurB family. FAD serves as cofactor.

The protein localises to the cytoplasm. It carries out the reaction UDP-N-acetyl-alpha-D-muramate + NADP(+) = UDP-N-acetyl-3-O-(1-carboxyvinyl)-alpha-D-glucosamine + NADPH + H(+). Its pathway is cell wall biogenesis; peptidoglycan biosynthesis. Cell wall formation. The protein is UDP-N-acetylenolpyruvoylglucosamine reductase of Tropheryma whipplei (strain Twist) (Whipple's bacillus).